A 646-amino-acid polypeptide reads, in one-letter code: Hexon protein p72 (646 aa).

The protein belongs to the NCLDV major capsid protein family. In terms of assembly, homotrimer. The membrane-bound form, but not the cytosolic one, assembles into large complexes. Interacts with the minor capsid proteins M1249L and p17; these interactions form a rigid zipper structure that stabilizes the capsomers.

Its subcellular location is the virion. The protein resides in the host endoplasmic reticulum membrane. It localises to the host cytoplasm. It is found in the host cytosol. In terms of biological role, capsid protein that self-assembles to form the pseudo-hexameric capsomers of the icosahedral capsid. The capsid is constructed of 2760 pseudo-hexameric capsomers and 12 pentameric capsomers, with a T=277 symmetry, about 200 nm in diameter. The capsid encapsulates the DNA-containing nucleoid, the core shell and the inner membrane. Plays an essential role in virion assembly. Involved in virus attachment to the host cell. This is Hexon protein p72 from Ornithodoros (relapsing fever ticks).